Here is a 211-residue protein sequence, read N- to C-terminus: MDDKQWERFLVPYRQAVEELKVKLKGIRTLYEYEDDHSPIEFVTGRVKPVASILEKARRKSIPLHEIETMQDIAGLRIMCQFVDDIQIVKEMLFARKDFTVVDQRDYIAEHKESGYRSYHLVVLYPLQTVSGEKHVLVEIQIRTLAMNFWATIEHSLNYKYSGNIPEKVKLRLQRASEAASRLDEEMSEIRGEVQEAQAAFSRKKKGSEQQ.

Guanosine 3'-diphosphate 5'-triphosphate contacts are provided by residues 21–28, 41–42, and 46–48; these read KVKLKGIR, EF, and RVK. ATP-binding positions include 46 to 48, serine 52, 56 to 59, aspartate 72, and arginine 77; these read RVK and KARR. Arginine 59 lines the guanosine 3'-diphosphate 5'-triphosphate pocket. Aspartate 72 contributes to the Mg(2+) binding site. Guanosine 3'-diphosphate 5'-triphosphate contacts are provided by residues arginine 105, 112–114, and histidine 120; that span reads KES. The active-site Proton acceptor is glutamate 139. Guanosine 3'-diphosphate 5'-triphosphate is bound by residues asparagine 148 and 151-155; that span reads ATIEH.

It belongs to the RelA/SpoT family. In terms of assembly, homotetramer.

It catalyses the reaction GTP + ATP = guanosine 3'-diphosphate 5'-triphosphate + AMP. The catalysed reaction is GDP + ATP = guanosine 3',5'-bis(diphosphate) + AMP. The protein operates within purine metabolism; ppGpp biosynthesis; ppGpp from GTP: step 1/2. With respect to regulation, allosterically regulated by its own products; pppGpp simulates synthesis 10-fold more than ppGpp. 2 pppGpp molecules bind in a regulatory cleft in the middle of the tetramer in an asymmetric manner. There is a specific contact of Lys-25 to the gamma-phosphate of pppGpp, explaining why pppGpp stimulates activity but ppGpp does not. Functionally, functions as a (p)ppGpp synthase; GDP can be used instead of GTP, resulting in an increase of (p)ppGpp synthesis. The enzyme binds ATP, then GDP or GTP and catalysis is highly cooperative. In eubacteria ppGpp (guanosine 3'-diphosphate 5'-diphosphate) is a mediator of the stringent response that coordinates a variety of cellular activities in response to changes in nutritional abundance. Probably has a minor role in the stringent response. In Bacillus subtilis (strain 168), this protein is GTP pyrophosphokinase YjbM (yjbM).